The sequence spans 425 residues: UPF0597 protein VFMJ11_0655 (425 aa).

This sequence belongs to the UPF0597 family.

This Aliivibrio fischeri (strain MJ11) (Vibrio fischeri) protein is UPF0597 protein VFMJ11_0655.